The primary structure comprises 522 residues: MMLRGNLKQVRIEKNPARLRALESAAGESEPVAAAAMALTLAGEQPPPPAPSEEHPDEEMGFTIDIKSFLKPGEKTYTQRCRLFVGNLPTDITEEDFKRLFERYGEPSEVFINRDRGFGFIRLESRTLAEIAKAELDGTILKSRPLRIRFATHGAALTVKNLSPVVSNELLEQAFSQFGPVEKAVVVVDDRGRATGKGFVEFAAKPPARKALERCGDGAFLLTTTPRPVIVEPMEQFDDEDGLPEKLMQKTQQYHKEREQPPRFAQPGTFEFEYASRWKALDEMEKQQREQVDRNIREAKEKLEAEMEAARHEHQLMLMRQDLMRRQEELRRLEELRNQELQKRKQIQLRHEEEHRRREEEMIRHREQEELRRQQEGFKPNYMENREQEMRMGDMGPRGAINMGDAFSPAPAGTQGPPPMMGMNMNNRGTIPGPPMGPGPAMGPEGAANMGTPMIPDNGAVHNDRFPQGPPSQMGSPMGNRTGSETPQAPMSAVGPVSGGPGGFGRGSQGGNFEGPNKRRRY.

Met-1 is modified (N-acetylmethionine). RRM domains follow at residues 81–153 (CRLF…FATH) and 155–236 (AALT…PMEQ). The segment at 124–357 (ESRTLAEIAK…QLRHEEEHRR (234 aa)) is sufficient for paraspeckles localization. Positions 230–357 (IVEPMEQFDD…QLRHEEEHRR (128 aa)) are sufficient for perinucleolar caps localization and interaction with NONO. Positions 282 to 376 (DEMEKQQREQ…EQEELRRQQE (95 aa)) form a coiled coil. Phosphoserine is present on residues Ser-408, Ser-472, and Ser-476. The interval 459–522 (GAVHNDRFPQ…FEGPNKRRRY (64 aa)) is disordered. Residues 471-489 (PSQMGSPMGNRTGSETPQA) show a composition bias toward polar residues. Over residues 497–513 (VSGGPGGFGRGSQGGNF) the composition is skewed to gly residues. Omega-N-methylarginine is present on Arg-506. Residue Ser-508 is modified to Phosphoserine.

This sequence belongs to the PSPC family. Forms heterodimers with NONO; this involves formation of a coiled coil domain by helices from both proteins. Found in a RNP complex with CAT2 transcribed nuclear RNA (CTN-RNA). Interaction with NONO is required for its targeting to paraspeckles and perinucleolar caps. Interacts with SFPQ. Part of the HDP-RNP complex composed of at least HEXIM1, PRKDC, XRCC5, XRCC6, paraspeckle proteins (SFPQ, NONO, PSPC1, RBM14, and MATR3) and NEAT1 RNA. Interacts with ALKBH5 (when acetylated); interaction with acetylated ALKBH5 facilitates recognition of N(6)-methyladenosine (m6A) RNAs.

Its subcellular location is the nucleus speckle. The protein resides in the nucleus. The protein localises to the nucleolus. It is found in the nucleus matrix. It localises to the cytoplasm. In terms of biological role, RNA-binding protein required for the formation of nuclear paraspeckles. Binds to poly(A), poly(G) and poly(U) RNA homopolymers. Regulates, cooperatively with NONO and SFPQ, androgen receptor-mediated gene transcription activity in Sertoli cell line. Regulates the circadian clock by repressing the transcriptional activator activity of the CLOCK-BMAL1 heterodimer. Plays a role in the regulation of DNA virus-mediated innate immune response by assembling into the HDP-RNP complex, a complex that serves as a platform for IRF3 phosphorylation and subsequent innate immune response activation through the cGAS-STING pathway. This Rattus norvegicus (Rat) protein is Paraspeckle component 1 (Pspc1).